A 63-amino-acid chain; its full sequence is Large ribosomal subunit protein uL30 (63 aa).

It belongs to the universal ribosomal protein uL30 family. As to quaternary structure, part of the 50S ribosomal subunit.

The chain is Large ribosomal subunit protein uL30 from Rickettsia prowazekii (strain Madrid E).